The primary structure comprises 140 residues: Small ribosomal subunit protein uS19 (140 aa).

Belongs to the universal ribosomal protein uS19 family.

In terms of biological role, protein S19 forms a complex with S13 that binds strongly to the 16S ribosomal RNA. This chain is Small ribosomal subunit protein uS19, found in Metallosphaera sedula (strain ATCC 51363 / DSM 5348 / JCM 9185 / NBRC 15509 / TH2).